The sequence spans 213 residues: Uridine kinase (213 aa).

Position 15-22 (15-22 (GASASGKS)) interacts with ATP.

The protein belongs to the uridine kinase family.

The protein resides in the cytoplasm. It catalyses the reaction uridine + ATP = UMP + ADP + H(+). It carries out the reaction cytidine + ATP = CMP + ADP + H(+). Its pathway is pyrimidine metabolism; CTP biosynthesis via salvage pathway; CTP from cytidine: step 1/3. The protein operates within pyrimidine metabolism; UMP biosynthesis via salvage pathway; UMP from uridine: step 1/1. The sequence is that of Uridine kinase from Klebsiella pneumoniae (strain 342).